The following is a 558-amino-acid chain: Atlastin-1 (558 aa).

Residues 1–27 are disordered; sequence MAKNRRDRNSWGGFSEKTYEWSSEEEE. Residues 1–34 form an N-terminal hypervariable region (HVR) region; the sequence is MAKNRRDRNSWGGFSEKTYEWSSEEEEPVKKAGP. Over 1-449 the chain is Cytoplasmic; that stretch reads MAKNRRDRNS…NIFHAARTPA (449 aa). Phosphoserine is present on residues Ser-10, Ser-22, and Ser-23. The 246-residue stretch at 64–309 folds into the GB1/RHD3-type G domain; that stretch reads DKEVVAVSVA…LIPWLLSPES (246 aa). GDP contacts are provided by Arg-77, Lys-78, Gly-79, Lys-80, Ser-81, Phe-82, Gln-148, Arg-217, Asp-218, Val-276, and Asn-279. GTP-binding residues include Arg-77, Lys-78, Gly-79, Lys-80, Ser-81, and Phe-82. Mg(2+) is bound at residue Ser-81. GTP-binding residues include Arg-217, Asp-218, and Val-276. The 3HB (three-helix bundle) domain stretch occupies residues 347 to 438; that stretch reads MLQATAEANN…YIQYIKHNDS (92 aa). Lys-395 carries the N6-acetyllysine modification. Residues 412–439 are a coiled coil; sequence EFSRRYLQQLESEIDELYIQYIKHNDSK. Residues 439 to 447 form a linker region; it reads KNIFHAART. The chain crosses the membrane as a helical span at residues 450–470; the sequence is TLFVVIFITYVIAGVTGFIGL. A topological domain (lumenal) is located at residue Asp-471. Residues 472–492 form a helical membrane-spanning segment; sequence IIASLCNMIMGLTLITLCTWA. Topologically, residues 493 to 558 are cytoplasmic; sequence YIRYSGEYRE…STEQSEKKKM (66 aa). An autoinhibitory domain region spans residues 521-558; the sequence is NEALYKLYSAAATHRHLYHQAFPTPKSESTEQSEKKKM.

Belongs to the TRAFAC class dynamin-like GTPase superfamily. GB1/RHD3 GTPase family. GB1 subfamily. In terms of assembly, monomeric and homodimeric. The homodimer, transiently formed by two molecules on opposing membranes, is the active form mediating ER membrane fusion. Interacts with REEP1, REEP5, RTN3 and RTN4 (via the transmembrane region); these proteins are involved in endoplasmic reticulum tubular network organization. Interacts with ZFYVE27; both proteins are involved in endoplasmic reticulum tubular network organization. Interacts with ARL6IP1; both proteins are involved in endoplasmic reticulum tubular network organization. Interacts with SPAST; the interaction is direct, could recruit SPAST to Golgi membranes. Interacts (via N-terminal region) with MAP4K4 (via CNH regulatory domain). May interact with TMED2. Interacts with CPT1C. Phosphorylated. Phosphorylation, by different kinases, of the N-terminal hypervariable region (HVR) regulates the ATL1-mediated membrane tethering step.

The protein localises to the endoplasmic reticulum membrane. The protein resides in the golgi apparatus membrane. Its subcellular location is the cell projection. It localises to the axon. The enzyme catalyses GTP + H2O = GDP + phosphate + H(+). Atlastin-1 (ATL1) is a membrane-anchored GTPase that mediates the GTP-dependent fusion of endoplasmic reticulum (ER) membranes, maintaining the continuous ER network. It facilitates the formation of three-way junctions where ER tubules intersect. Two atlastin-1 on neighboring ER tubules bind GTP and form loose homodimers through the GB1/RHD3-type G domains and 3HB regions. Upon GTP hydrolysis, the 3HB regions tighten, pulling the membranes together to drive their fusion. After fusion, the homodimer disassembles upon release of inorganic phosphate (Pi). Subsequently, GDP dissociates, resetting the monomers to a conformation ready for a new fusion cycle. May also regulate more or less directly Golgi biogenesis. Indirectly regulates axonal development. The sequence is that of Atlastin-1 from Pongo abelii (Sumatran orangutan).